The following is a 331-amino-acid chain: Putative heat stress transcription factor A-6a (331 aa).

Residues 135–160 are disordered; it reads RRGAGTGSTTPRAVNCGGGGGEGEVE. Positions 156–238 form a coiled coil; the sequence is EGEVERLRRD…VERKKRRMLA (83 aa). Positions 162-212 are hydrophobic repeat HR-A/B; sequence LRRDKEALARELARLRRQQQEARAQLLDMERRVRGTERRQEQCTEFLARAL. Residues 230 to 235 carry the Nuclear localization signal motif; that stretch reads ERKKRR. Residues 246–253 carry the Nuclear export signal motif; that stretch reads LTFEALAL. The AHA1 motif lies at 270–279; the sequence is DMIWYELLGE. The AHA2 signature appears at 305 to 313; the sequence is AEPWEEMGE.

It belongs to the HSF family. Class A subfamily. Homotrimer. Post-translationally, exhibits temperature-dependent phosphorylation.

Its subcellular location is the cytoplasm. The protein resides in the nucleus. Transcriptional regulator that specifically binds DNA of heat shock promoter elements (HSE). The polypeptide is Putative heat stress transcription factor A-6a (HSFA6A) (Oryza sativa subsp. japonica (Rice)).